A 568-amino-acid chain; its full sequence is DNA ligase 2 (568 aa).

Position 254 (Glu254) interacts with ATP. Lys256 serves as the catalytic N6-AMP-lysine intermediate. Arg261, Arg276, Glu306, Phe346, Arg425, and Lys431 together coordinate ATP.

It belongs to the ATP-dependent DNA ligase family. Mg(2+) is required as a cofactor.

The enzyme catalyses ATP + (deoxyribonucleotide)n-3'-hydroxyl + 5'-phospho-(deoxyribonucleotide)m = (deoxyribonucleotide)n+m + AMP + diphosphate.. Functionally, DNA ligase that seals nicks in double-stranded DNA during DNA replication, DNA recombination and DNA repair. The chain is DNA ligase 2 from Methanosarcina acetivorans (strain ATCC 35395 / DSM 2834 / JCM 12185 / C2A).